Here is a 557-residue protein sequence, read N- to C-terminus: MQDTPQTLNDKAKESWRALQQHAADTANDHILDYFHSDPSRVQSYSLTAAGLTLDYSKNRANSITLEKLVKLAEDAGMKRSIDAMFAGEPINHTEGRAVLHTALRDSSDTPVLVDGQDIKPEIRSALAQMERFVSKVHRGEWLGYSGKPINDVVSIGIGGSYLGPRVAVEALRPYWQENIRCHFVSNVDGSDIAYTLENLNPETTLFIVQSKSFTTQETLANSMTAREWYLREGGSEAGLSKHFVAVSSNVQRARDFGIDAENVFPMWDWVGGRYSLWSAIGLPIALQVDMKAFRELLAGAEAMDQHFKTAPLEQNMPVLMGMLGIWYHNFLGADSYVILPYDQTLENLPAHLQQVDMESNGKGVNRAGIGVDYATGPIIWGGAGTNGQHAYHQLLHQGTRWTPADFILPLKTHKPAGRHHAMLASNCFAQSQALMCGKSLEKARQELLDAGMSSERAEELAPHKVIPGNRPSNTLVMDEINPHTLGALIALYEQKVFVQGVIWNLNSFDQWGVELGKQLSDSILPMLLDTGASTDALDPSSAALVERFRRANGSGS.

The active-site Proton donor is the Glu-359. Residues His-390 and Lys-518 contribute to the active site.

The protein belongs to the GPI family.

It is found in the cytoplasm. It carries out the reaction alpha-D-glucose 6-phosphate = beta-D-fructose 6-phosphate. Its pathway is carbohydrate biosynthesis; gluconeogenesis. It functions in the pathway carbohydrate degradation; glycolysis; D-glyceraldehyde 3-phosphate and glycerone phosphate from D-glucose: step 2/4. In terms of biological role, catalyzes the reversible isomerization of glucose-6-phosphate to fructose-6-phosphate. The sequence is that of Glucose-6-phosphate isomerase from Hahella chejuensis (strain KCTC 2396).